The primary structure comprises 511 residues: 2,3-bisphosphoglycerate-independent phosphoglycerate mutase (511 aa).

Mn(2+)-binding residues include aspartate 12 and serine 62. Serine 62 acts as the Phosphoserine intermediate in catalysis. Residues histidine 123, 154–155 (RD), arginine 181, arginine 187, 252–255 (RPDR), and lysine 335 contribute to the substrate site. Residues aspartate 402, histidine 406, aspartate 444, histidine 445, and histidine 462 each contribute to the Mn(2+) site.

Belongs to the BPG-independent phosphoglycerate mutase family. In terms of assembly, monomer. Mn(2+) is required as a cofactor.

It catalyses the reaction (2R)-2-phosphoglycerate = (2R)-3-phosphoglycerate. It participates in carbohydrate degradation; glycolysis; pyruvate from D-glyceraldehyde 3-phosphate: step 3/5. Catalyzes the interconversion of 2-phosphoglycerate and 3-phosphoglycerate. The chain is 2,3-bisphosphoglycerate-independent phosphoglycerate mutase from Acholeplasma laidlawii (strain PG-8A).